A 94-amino-acid chain; its full sequence is CRISPR-associated endoribonuclease Cas2 1 (94 aa).

Residue Asp8 participates in Mg(2+) binding.

Belongs to the CRISPR-associated endoribonuclease Cas2 protein family. Homodimer, forms a heterotetramer with a Cas1 homodimer. The cofactor is Mg(2+).

Its function is as follows. CRISPR (clustered regularly interspaced short palindromic repeat), is an adaptive immune system that provides protection against mobile genetic elements (viruses, transposable elements and conjugative plasmids). CRISPR clusters contain sequences complementary to antecedent mobile elements and target invading nucleic acids. CRISPR clusters are transcribed and processed into CRISPR RNA (crRNA). Involved in the integration of spacer DNA into the CRISPR cassette. Functions as a ssRNA-specific endoribonuclease. The polypeptide is CRISPR-associated endoribonuclease Cas2 1 (cas21) (Archaeoglobus fulgidus (strain ATCC 49558 / DSM 4304 / JCM 9628 / NBRC 100126 / VC-16)).